Consider the following 510-residue polypeptide: NAD(P)H-quinone oxidoreductase subunit 2 A, chloroplastic (510 aa).

The next 13 membrane-spanning stretches (helical) occupy residues Leu-24–Leu-44, Ile-57–Phe-77, Ile-99–Ile-119, Met-124–Cys-144, Leu-149–Tyr-169, Tyr-183–Gly-203, Pro-227–Ala-247, Trp-295–Ile-315, Met-323–Asp-343, Tyr-354–Leu-374, Ala-395–Phe-415, Leu-418–Leu-438, and Met-484–Ile-504.

Belongs to the complex I subunit 2 family. NDH is composed of at least 16 different subunits, 5 of which are encoded in the nucleus.

Its subcellular location is the plastid. It localises to the chloroplast thylakoid membrane. The enzyme catalyses a plastoquinone + NADH + (n+1) H(+)(in) = a plastoquinol + NAD(+) + n H(+)(out). The catalysed reaction is a plastoquinone + NADPH + (n+1) H(+)(in) = a plastoquinol + NADP(+) + n H(+)(out). Its function is as follows. NDH shuttles electrons from NAD(P)H:plastoquinone, via FMN and iron-sulfur (Fe-S) centers, to quinones in the photosynthetic chain and possibly in a chloroplast respiratory chain. The immediate electron acceptor for the enzyme in this species is believed to be plastoquinone. Couples the redox reaction to proton translocation, and thus conserves the redox energy in a proton gradient. In Solanum tuberosum (Potato), this protein is NAD(P)H-quinone oxidoreductase subunit 2 A, chloroplastic.